The sequence spans 286 residues: Probable ketoamine kinase EAE_16955 (286 aa).

92-94 (EYL) contributes to the ATP binding site. D194 functions as the Proton acceptor in the catalytic mechanism.

This sequence belongs to the fructosamine kinase family.

In terms of biological role, ketoamine kinase that phosphorylates ketoamines on the third carbon of the sugar moiety to generate ketoamine 3-phosphate. This Klebsiella aerogenes (strain ATCC 13048 / DSM 30053 / CCUG 1429 / JCM 1235 / KCTC 2190 / NBRC 13534 / NCIMB 10102 / NCTC 10006 / CDC 819-56) (Enterobacter aerogenes) protein is Probable ketoamine kinase EAE_16955.